The primary structure comprises 172 residues: Nascent polypeptide-associated complex subunit beta (172 aa).

Disordered stretches follow at residues 36–58 (KTGK…GDDK) and 142–172 (QNMQ…DKVE). Residues 41–50 (TPRRKMKRAP) are compositionally biased toward basic residues. In terms of domain architecture, NAC-A/B spans 54 to 119 (GGDDKKLQQT…GEDKELTELV (66 aa)).

This sequence belongs to the NAC-beta family. As to quaternary structure, part of the nascent polypeptide-associated complex (NAC), consisting of EGD2 and EGD1. NAC associates with ribosomes via EGD1.

Its subcellular location is the cytoplasm. It localises to the nucleus. In terms of biological role, component of the nascent polypeptide-associated complex (NAC), a dynamic component of the ribosomal exit tunnel, protecting the emerging polypeptides from interaction with other cytoplasmic proteins to ensure appropriate nascent protein targeting. The NAC complex also promotes mitochondrial protein import by enhancing productive ribosome interactions with the outer mitochondrial membrane and blocks the inappropriate interaction of ribosomes translating non-secretory nascent polypeptides with translocation sites in the membrane of the endoplasmic reticulum. EGD1 may act as a transcription factor that exert a negative effect on the expression of several genes that are transcribed by RNA polymerase II. This is Nascent polypeptide-associated complex subunit beta (EGD1) from Pyricularia oryzae (strain 70-15 / ATCC MYA-4617 / FGSC 8958) (Rice blast fungus).